The following is a 657-amino-acid chain: ER degradation-enhancing alpha-mannosidase-like protein 1 (657 aa).

Residues 1–4 are Cytoplasmic-facing; sequence MQWR. Residues 5 to 25 traverse the membrane as a helical; Signal-anchor for type II membrane protein segment; sequence ALVLGLVLLRLGLHGVLWLVF. Residues 26-657 are Lumenal-facing; the sequence is GLGPSMGFYQ…RQIDQMVGLI (632 aa). The segment at 48-94 is disordered; the sequence is SPDGPASPTSGPVGRPGGVSGPSWLQPPGTGAAQSPRKAPRRPGPGM. 5 N-linked (GlcNAc...) asparagine glycosylation sites follow: N181, N198, N299, N342, and N624.

This sequence belongs to the glycosyl hydrolase 47 family. In terms of assembly, interacts with DNAJC10. Interacts with DERL2 and DERL3. Binds to SEL1L.

It localises to the endoplasmic reticulum membrane. Functionally, extracts misfolded glycoproteins, but not glycoproteins undergoing productive folding, from the calnexin cycle. It is directly involved in endoplasmic reticulum-associated degradation (ERAD) and targets misfolded glycoproteins for degradation in an N-glycan-independent manner, probably by forming a complex with SEL1L. It has low mannosidase activity, catalyzing mannose trimming from Man8GlcNAc2 to Man7GlcNAc2. This chain is ER degradation-enhancing alpha-mannosidase-like protein 1 (EDEM1), found in Homo sapiens (Human).